The sequence spans 135 residues: DNA-binding protein H-NS homolog (135 aa).

A DNA-binding region spans residues 112-117 (QGRTPS).

The protein belongs to the histone-like protein H-NS family. In terms of assembly, homodimer that oligomerizes on DNA into higher-order complexes that form bridges between disparate regions of DNA compacting it.

It is found in the cytoplasm. Its subcellular location is the nucleoid. A DNA-binding protein implicated in transcriptional repression and chromosome organization and compaction. Binds nucleation sites in AT-rich DNA and bridges them, forming higher-order nucleoprotein complexes and condensing the chromosome. A subset of genes are repressed by H-NS in association with other proteins. In Buchnera aphidicola subsp. Acyrthosiphon pisum (strain APS) (Acyrthosiphon pisum symbiotic bacterium), this protein is DNA-binding protein H-NS homolog (hns).